The primary structure comprises 408 residues: Phosphoglycerate kinase (408 aa).

Residues 24 to 26, Arg40, 63 to 66, Arg122, and Arg166 contribute to the substrate site; these read DLN and HLGR. ATP is bound by residues Lys216, Gly304, Glu335, and 364-367; that span reads GGDS.

This sequence belongs to the phosphoglycerate kinase family. Monomer.

Its subcellular location is the cytoplasm. The catalysed reaction is (2R)-3-phosphoglycerate + ATP = (2R)-3-phospho-glyceroyl phosphate + ADP. Its pathway is carbohydrate degradation; glycolysis; pyruvate from D-glyceraldehyde 3-phosphate: step 2/5. This is Phosphoglycerate kinase from Mycolicibacterium smegmatis (strain ATCC 700084 / mc(2)155) (Mycobacterium smegmatis).